The sequence spans 952 residues: Probable mixed-linked glucan synthase 6 (952 aa).

The next 2 helical transmembrane spans lie at 102–122 (LLHPYRVLIFVRLIAFTLFVI) and 132–152 (AMWLWVTSIAGEFWFGFSWLL). D227 is a catalytic residue. Positions 278-308 (EEFVNDRRRVRKEYDDFKARINGLEHDIKQR) form a coiled coil. Positions 429 and 431 each coordinate substrate. Residue D636 is part of the active site. Helical transmembrane passes span 718-738 (LFLIFYTTVPALSFVTGHFIV), 744-764 (MFYVYLAIVLGTLLILAVLEV), 782-802 (MTASCSAYLAAVLQVVTKVVF), 834-854 (WLMITPIIIILVNIIGSAVAF), 865-885 (WLKVAGGVFFNFWVLFHLYPF), and 898-918 (VVVLVWWAFTFVITAVLYINI).

It belongs to the glycosyltransferase 2 family. Plant cellulose synthase-like F subfamily.

The protein resides in the golgi apparatus membrane. May catalyze both beta-1,3 and beta-1,4 glycosidic linkage on beta-D-glucan. Essential for (1,3;1,4)-beta-D-glucans synthesis in grasses and cereals (Poaceae). The mixed-linked glucans (which are not present in walls of dicotyledons or most other monocotyledonous plants) are particularly important constituents of the walls of the starchy endosperm and aleurone cells of cereal grains such as oats, wheat, rice and barley. They can account for up to 70% by weight of the wall. This chain is Probable mixed-linked glucan synthase 6 (CSLF6), found in Oryza sativa subsp. japonica (Rice).